A 319-amino-acid polypeptide reads, in one-letter code: Vesicle-associated membrane protein-associated protein scs22 (319 aa).

Residues 1–121 (MALECDSTIV…SERKIRCVYS (121 aa)) enclose the MSP domain. Over 1–298 (MALECDSTIV…GAKVVPQIHN (298 aa)) the chain is Cytoplasmic. Residues 127 to 150 (ANAHANAHHQPAQTTTTSIPTSAT) show a composition bias toward low complexity. A disordered region spans residues 127 to 244 (ANAHANAHHQ…TTSPNNENNA (118 aa)). Composition is skewed to polar residues over residues 151-165 (DNYT…QSYS), 185-201 (STAT…SAVS), and 231-244 (SVPT…ENNA). T236 is modified (phosphothreonine). Phosphoserine occurs at positions 237 and 281. A helical; Anchor for type IV membrane protein transmembrane segment spans residues 299 to 319 (TVTVQTAFLLAIICFLIGLLF).

Belongs to the VAMP-associated protein (VAP) (TC 9.B.17) family. In terms of assembly, interacts with epr1.

Its subcellular location is the endoplasmic reticulum membrane. In terms of biological role, vesicle-associated membrane protein-associated protein (VAP) implicated in maintaining the cortical endoplasmic reticulum (ER)-plasma membrane (PM) attachment. ER-PM contacts function to modulate the distribution of contractile ring components to ensure robust ring assembly. ER-PM contacts function also in controlling exocytosis and maintenance of cell polarity regulating cell shape. VAPs play an important role in regulating eisosome assembly. VAPs also contribute to ER-phagy by tethering atg8 to the ER membrane, but also by maintaining the ER-plasma membrane contact. In Schizosaccharomyces pombe (strain 972 / ATCC 24843) (Fission yeast), this protein is Vesicle-associated membrane protein-associated protein scs22 (scs22).